Reading from the N-terminus, the 361-residue chain is MATLEAIKYDGEKLLVLDQIKLPLETHYDEVLSIQDGWDAIREMRVRGAPAIAIVAALTIAVVMKRSTFATAAELAAFVRTSLEHLRTSRPTAVNLFEMAGRLEALLQEQPADCTEAALRQAVLSYIEGMMQADIADNQAIGKFGAEAILKDLSADVKVKVLTHCNTGSLATARYGTALGVIRSLHEQQRLEHAFCTETRPYNQGARLTAYELVTEGIPGTLVADSMVSLLMKQKGISAVVVGADRVVANGDTANKIGTYQIAIAAKHHGVPFFVAAPLTSVDLKLSHGSEITIEERPGKELTHIFGQQLAAPGIGTWNPAFDVTPADLITGIITERGVAYKAEGQQEFDMASFAASVGRA.

Catalysis depends on aspartate 245, which acts as the Proton donor.

The protein belongs to the eIF-2B alpha/beta/delta subunits family. MtnA subfamily.

It is found in the cytoplasm. The protein localises to the nucleus. The enzyme catalyses 5-(methylsulfanyl)-alpha-D-ribose 1-phosphate = 5-(methylsulfanyl)-D-ribulose 1-phosphate. It functions in the pathway amino-acid biosynthesis; L-methionine biosynthesis via salvage pathway; L-methionine from S-methyl-5-thio-alpha-D-ribose 1-phosphate: step 1/6. Its function is as follows. Catalyzes the interconversion of methylthioribose-1-phosphate (MTR-1-P) into methylthioribulose-1-phosphate (MTRu-1-P). The chain is Methylthioribose-1-phosphate isomerase from Monosiga brevicollis (Choanoflagellate).